The primary structure comprises 334 residues: GTP 3',8-cyclase (334 aa).

One can recognise a Radical SAM core domain in the interval 13–239 (RFHRKFYYLR…KVKAANDGPA (227 aa)). R22 is a GTP binding site. 2 residues coordinate [4Fe-4S] cluster: C29 and C33. Position 35 (Y35) interacts with S-adenosyl-L-methionine. C36 provides a ligand contact to [4Fe-4S] cluster. R73 contacts GTP. G77 lines the S-adenosyl-L-methionine pocket. T104 provides a ligand contact to GTP. Position 128 (S128) interacts with S-adenosyl-L-methionine. K165 lines the GTP pocket. Position 199 (M199) interacts with S-adenosyl-L-methionine. [4Fe-4S] cluster contacts are provided by C262 and C265. 267 to 269 (RLR) serves as a coordination point for GTP. C279 contacts [4Fe-4S] cluster.

This sequence belongs to the radical SAM superfamily. MoaA family. In terms of assembly, monomer and homodimer. The cofactor is [4Fe-4S] cluster.

The enzyme catalyses GTP + AH2 + S-adenosyl-L-methionine = (8S)-3',8-cyclo-7,8-dihydroguanosine 5'-triphosphate + 5'-deoxyadenosine + L-methionine + A + H(+). It functions in the pathway cofactor biosynthesis; molybdopterin biosynthesis. Functionally, catalyzes the cyclization of GTP to (8S)-3',8-cyclo-7,8-dihydroguanosine 5'-triphosphate. In Vibrio vulnificus (strain CMCP6), this protein is GTP 3',8-cyclase.